The primary structure comprises 111 residues: MLQAKKTEVAEALTKAEAGRMELELSVTKLRAEEASLQDSLSKLSALNESLAQDKLDLNCLVTQLEEEKAMLQGRQRQAEQEATVAPAEQEWLEELWLEQEVARQGLEGSL.

Residues 21–86 (MELELSVTKL…RQAEQEATVA (66 aa)) adopt a coiled-coil conformation.

The protein belongs to the rootletin family.

The chain is Putative ciliary rootlet coiled-coil protein-like 1 protein (CROCCP2) from Homo sapiens (Human).